We begin with the raw amino-acid sequence, 732 residues long: Putative pectinesterase/pectinesterase inhibitor 28 (732 aa).

A helical transmembrane segment spans residues 17–37 (VIISISSVLLISMVVAVTIGV). N-linked (GlcNAc...) asparagine glycosylation is found at asparagine 40, asparagine 93, asparagine 278, and asparagine 297. Residues 51–204 (TTSVKAIKDV…VQLTHNGLAM (154 aa)) form a pectinesterase inhibitor 28 region. The segment at 252 to 548 (DIVVAQDGSG…FTPAQYIQGD (297 aa)) is pectinesterase 28. The substrate site is built by threonine 327 and glutamine 357. Catalysis depends on aspartate 380, which acts as the Proton donor; for pectinesterase activity. The cysteines at positions 394 and 414 are disulfide-linked. Aspartate 401 functions as the Nucleophile; for pectinesterase activity in the catalytic mechanism. An N-linked (GlcNAc...) asparagine glycan is attached at asparagine 413. Substrate contacts are provided by arginine 469 and tryptophan 471. Residues asparagine 566, asparagine 570, and asparagine 581 are each glycosylated (N-linked (GlcNAc...) asparagine). Low complexity-rich tracts occupy residues 570-620 (NSTV…PSTS) and 633-732 (PSMV…SSIG). The tract at residues 570-732 (NSTVTGSSLS…PSASPQSSIG (163 aa)) is disordered.

It in the N-terminal section; belongs to the PMEI family. The protein in the C-terminal section; belongs to the pectinesterase family. In terms of tissue distribution, expressed in flower buds.

The protein resides in the membrane. The catalysed reaction is [(1-&gt;4)-alpha-D-galacturonosyl methyl ester](n) + n H2O = [(1-&gt;4)-alpha-D-galacturonosyl](n) + n methanol + n H(+). It participates in glycan metabolism; pectin degradation; 2-dehydro-3-deoxy-D-gluconate from pectin: step 1/5. In terms of biological role, acts in the modification of cell walls via demethylesterification of cell wall pectin. This chain is Putative pectinesterase/pectinesterase inhibitor 28 (PME28), found in Arabidopsis thaliana (Mouse-ear cress).